The sequence spans 259 residues: MSGQENHDHGRISSTPAAASEPSKAAAHSSDYAPYPKLDPTDVTPPPPQPIPTGAAATTMPAESNPYVSPSPAPRNTMDSVKDTLGKWGKMAADATKKAEDLAGNFWQHLKTGPSVADAAVSRIAQGTKILAEGGYEKVFKQTFDCLPDEKLLKTYACYLSTSAGPVLGVMYLSTHKLAFSSDNPLSYKEGEQTLWSYYKVVLPANQLKAVNPSTSRVNTSDKYIQVISIDNHEFWFMGFVTYESAVKSLQEAVQSHGP.

Residues 1 to 11 are compositionally biased toward basic and acidic residues; the sequence is MSGQENHDHGR. The segment at 1–79 is disordered; that stretch reads MSGQENHDHG…PSPAPRNTMD (79 aa). The segment covering 13-30 has biased composition (low complexity); the sequence is SSTPAAASEPSKAAAHSS. Positions 138–215 constitute a GRAM domain; that stretch reads KVFKQTFDCL…NQLKAVNPST (78 aa).

This sequence belongs to the GEM family. Interacts with AFH1.

The polypeptide is GEM-like protein 1 (FIP1) (Arabidopsis thaliana (Mouse-ear cress)).